The sequence spans 736 residues: Phosphoribosylformylglycinamidine synthase subunit PurL (736 aa).

Residue His-48 is part of the active site. 2 residues coordinate ATP: Tyr-51 and Lys-90. Position 92 (Glu-92) interacts with Mg(2+). Substrate-binding positions include 93-96 and Arg-115; that span reads SHNH. His-94 functions as the Proton acceptor in the catalytic mechanism. Asp-116 is a binding site for Mg(2+). Residue Gln-239 coordinates substrate. Asp-267 is a Mg(2+) binding site. 311-313 serves as a coordination point for substrate; the sequence is ESQ. ATP-binding residues include Asp-492 and Gly-529. Asn-530 provides a ligand contact to Mg(2+). Ser-532 contacts substrate.

The protein belongs to the FGAMS family. Monomer. Part of the FGAM synthase complex composed of 1 PurL, 1 PurQ and 2 PurS subunits.

Its subcellular location is the cytoplasm. It carries out the reaction N(2)-formyl-N(1)-(5-phospho-beta-D-ribosyl)glycinamide + L-glutamine + ATP + H2O = 2-formamido-N(1)-(5-O-phospho-beta-D-ribosyl)acetamidine + L-glutamate + ADP + phosphate + H(+). It participates in purine metabolism; IMP biosynthesis via de novo pathway; 5-amino-1-(5-phospho-D-ribosyl)imidazole from N(2)-formyl-N(1)-(5-phospho-D-ribosyl)glycinamide: step 1/2. Part of the phosphoribosylformylglycinamidine synthase complex involved in the purines biosynthetic pathway. Catalyzes the ATP-dependent conversion of formylglycinamide ribonucleotide (FGAR) and glutamine to yield formylglycinamidine ribonucleotide (FGAM) and glutamate. The FGAM synthase complex is composed of three subunits. PurQ produces an ammonia molecule by converting glutamine to glutamate. PurL transfers the ammonia molecule to FGAR to form FGAM in an ATP-dependent manner. PurS interacts with PurQ and PurL and is thought to assist in the transfer of the ammonia molecule from PurQ to PurL. The sequence is that of Phosphoribosylformylglycinamidine synthase subunit PurL from Bradyrhizobium sp. (strain ORS 278).